We begin with the raw amino-acid sequence, 335 residues long: Holliday junction branch migration complex subunit RuvB (335 aa).

The interval 1–181 (MDRIVEIEKY…FGMQFRLEFY (181 aa)) is large ATPase domain (RuvB-L). ATP is bound by residues leucine 20, arginine 21, glycine 62, lysine 65, threonine 66, threonine 67, 128 to 130 (EDY), arginine 171, tyrosine 181, and arginine 218. Residue threonine 66 coordinates Mg(2+). The tract at residues 182–252 (KDSELALILQ…RANEALNSLG (71 aa)) is small ATPAse domain (RuvB-S). The segment at 255–335 (ELGFDAMDLR…LNYEKTLFEE (81 aa)) is head domain (RuvB-H). Positions 309 and 314 each coordinate DNA.

The protein belongs to the RuvB family. As to quaternary structure, homohexamer. Forms an RuvA(8)-RuvB(12)-Holliday junction (HJ) complex. HJ DNA is sandwiched between 2 RuvA tetramers; dsDNA enters through RuvA and exits via RuvB. An RuvB hexamer assembles on each DNA strand where it exits the tetramer. Each RuvB hexamer is contacted by two RuvA subunits (via domain III) on 2 adjacent RuvB subunits; this complex drives branch migration. In the full resolvosome a probable DNA-RuvA(4)-RuvB(12)-RuvC(2) complex forms which resolves the HJ.

It localises to the cytoplasm. It catalyses the reaction ATP + H2O = ADP + phosphate + H(+). Functionally, the RuvA-RuvB-RuvC complex processes Holliday junction (HJ) DNA during genetic recombination and DNA repair, while the RuvA-RuvB complex plays an important role in the rescue of blocked DNA replication forks via replication fork reversal (RFR). RuvA specifically binds to HJ cruciform DNA, conferring on it an open structure. The RuvB hexamer acts as an ATP-dependent pump, pulling dsDNA into and through the RuvAB complex. RuvB forms 2 homohexamers on either side of HJ DNA bound by 1 or 2 RuvA tetramers; 4 subunits per hexamer contact DNA at a time. Coordinated motions by a converter formed by DNA-disengaged RuvB subunits stimulates ATP hydrolysis and nucleotide exchange. Immobilization of the converter enables RuvB to convert the ATP-contained energy into a lever motion, pulling 2 nucleotides of DNA out of the RuvA tetramer per ATP hydrolyzed, thus driving DNA branch migration. The RuvB motors rotate together with the DNA substrate, which together with the progressing nucleotide cycle form the mechanistic basis for DNA recombination by continuous HJ branch migration. Branch migration allows RuvC to scan DNA until it finds its consensus sequence, where it cleaves and resolves cruciform DNA. This is Holliday junction branch migration complex subunit RuvB from Campylobacter jejuni (strain RM1221).